The sequence spans 626 residues: Fructose-1,6-bisphosphatase class 3 (626 aa).

Belongs to the FBPase class 3 family. Mn(2+) is required as a cofactor.

The enzyme catalyses beta-D-fructose 1,6-bisphosphate + H2O = beta-D-fructose 6-phosphate + phosphate. Its pathway is carbohydrate biosynthesis; gluconeogenesis. This Enterococcus faecalis (strain ATCC 700802 / V583) protein is Fructose-1,6-bisphosphatase class 3.